Here is a 106-residue protein sequence, read N- to C-terminus: Large ribosomal subunit protein bL21 (106 aa).

It belongs to the bacterial ribosomal protein bL21 family. Part of the 50S ribosomal subunit. Contacts protein L20.

Its function is as follows. This protein binds to 23S rRNA in the presence of protein L20. In Dichelobacter nodosus (strain VCS1703A), this protein is Large ribosomal subunit protein bL21.